Reading from the N-terminus, the 271-residue chain is Na(+), Li(+), K(+)/H(+) antiporter subunit B (271 aa).

7 consecutive transmembrane segments (helical) span residues 2 to 22 (ILLT…AIIF), 36 to 56 (LPQV…FLVG), 94 to 114 (WVYL…PSLI), 130 to 150 (PFML…LGTW), 152 to 172 (IVMG…VIIQ), 193 to 213 (STIT…SIPG), and 216 to 236 (ALMD…ITVM). The tract at residues 252–271 (TPHLSYSKAPPPSKGDNNAL) is disordered.

This sequence belongs to the UmpA/UmpB family. Heterodimer composed of UmpA and UmpB.

It localises to the cell membrane. Part of a two-component antiporter that catalyzes the efflux of Na(+), Li(+) and K(+) in exchange for external protons. Shows a preference for Na(+), followed by K(+) and Li(+). The chain is Na(+), Li(+), K(+)/H(+) antiporter subunit B from Vreelandella zhaodongensis (Halomonas zhaodongensis).